Reading from the N-terminus, the 381-residue chain is Teichoic acid glycerol-phosphate primase (381 aa).

Belongs to the CDP-glycerol glycerophosphotransferase family.

The protein resides in the cell membrane. It carries out the reaction N-acetyl-beta-D-mannosaminyl-(1-&gt;4)-N-acetyl-alpha-D-glucosaminyl di-trans,octa-cis-undecaprenyl diphosphate + CDP-glycerol = 4-O-[(2R)-glycerylphospho]-N-acetyl-beta-D-mannosaminyl-(1-&gt;4)-N-acetyl-alpha-D-glucosaminyl di-trans,octa-cis-undecaprenyl diphosphate + CMP + H(+). Its pathway is cell wall biogenesis; poly(glycerol phosphate) teichoic acid biosynthesis. Its function is as follows. Catalyzes the addition of a single glycerol phosphate residue to the prenoldiphosphate-linked disaccharide, as a primer for polymerisation by TagF. This is Teichoic acid glycerol-phosphate primase (tagB) from Bacillus subtilis (strain 168).